The following is a 275-amino-acid chain: MAALDGLPPLRDVIQRHGLDARKALGQNFLLDLNLTQKVARTAGALEETTVFEVGPGPGGLTRAILALGAKKVIAVERDARCLPALAEIADHYPGRLEVIEGDALKTDFEALAPEGPVKIIANLPYNVGTQLLVNWLLPKAWPPFWQSLTLMFQKEVGERIVAGEDDDHYGRLGVLCGWRTDARMAFDVPPQAFTPPPKVTSTVVHLLPRENPVQCAVANLEKVTQAAFGQRRKMLRQSLKPLGGESLLVKAGIDPARRAETLSVEEFCLLANNL.

Asparagine 28, leucine 30, glycine 55, glutamate 77, aspartate 103, and asparagine 123 together coordinate S-adenosyl-L-methionine.

This sequence belongs to the class I-like SAM-binding methyltransferase superfamily. rRNA adenine N(6)-methyltransferase family. RsmA subfamily.

The protein localises to the cytoplasm. The enzyme catalyses adenosine(1518)/adenosine(1519) in 16S rRNA + 4 S-adenosyl-L-methionine = N(6)-dimethyladenosine(1518)/N(6)-dimethyladenosine(1519) in 16S rRNA + 4 S-adenosyl-L-homocysteine + 4 H(+). In terms of biological role, specifically dimethylates two adjacent adenosines (A1518 and A1519) in the loop of a conserved hairpin near the 3'-end of 16S rRNA in the 30S particle. May play a critical role in biogenesis of 30S subunits. In Rhizobium etli (strain ATCC 51251 / DSM 11541 / JCM 21823 / NBRC 15573 / CFN 42), this protein is Ribosomal RNA small subunit methyltransferase A.